Here is a 1130-residue protein sequence, read N- to C-terminus: MHC class II transactivator (1130 aa).

Positions 94–132 (AYANIAELDQYVFQDSQLEGLSKDIFKHIGPDEVIGESM) are required for acetyltransferase activity. Positions 269–303 (PSGFTVHGLPTSPDRPGSTSPFAPSATDLPSMPEP) are disordered. The 311-residue stretch at 414-724 (RVIAVLGKAG…CFLGALWLAL (311 aa)) folds into the NACHT domain. 420 to 427 (GKAGQGKS) provides a ligand contact to GTP. LRR repeat units lie at residues 985-1008 (SLQHLDLDALSENKIGDEGVSQLS), 1016-1037 (SLETLNLSQNNITDLGAYKLAE), 1045-1066 (SLLRLSLYNNCICDVGAESLAR), and 1073-1093 (SLRVMDVQYNKFTAAGAQQLA).

In terms of assembly, interacts with ZXDA and ZXDC. Interacts with PML (isoform PML-2). Interacts with TAF7; interaction inhibits CIITA acetyltransferase activity, thereby repressing transcription. Post-translationally, autophosphorylated, affecting interaction with TAF7.

The protein resides in the nucleus. It is found in the PML body. The enzyme catalyses L-seryl-[protein] + ATP = O-phospho-L-seryl-[protein] + ADP + H(+). It carries out the reaction L-threonyl-[protein] + ATP = O-phospho-L-threonyl-[protein] + ADP + H(+). In terms of biological role, essential for transcriptional activity of the HLA class II promoter; activation is via the proximal promoter. Does not bind DNA. May act in a coactivator-like fashion through protein-protein interactions by contacting factors binding to the proximal MHC class II promoter, to elements of the transcription machinery, or both PubMed:8402893, PubMed:7749984,. Alternatively it may activate HLA class II transcription by modifying proteins that bind to the MHC class II promoter. Also mediates enhanced MHC class I transcription; the promoter element requirements for CIITA-mediated transcription are distinct from those of constitutive MHC class I transcription, and CIITA can functionally replace TAF1 at these genes. Activates CD74 transcription. Exhibits intrinsic GTP-stimulated acetyltransferase activity. Exhibits serine/threonine protein kinase activity: can phosphorylate the TFIID component TAF7, the RAP74 subunit of the general transcription factor TFIIF, histone H2B at 'Ser-37' and other histones (in vitro). Has antiviral activity against Ebola virus and coronaviruses, including SARS-CoV-2. Induces resistance by up-regulation of the p41 isoform of CD74, which blocks cathepsin-mediated cleavage of viral glycoproteins, thereby preventing viral fusion. Its function is as follows. Exhibits dominant-negative suppression of MHC class II gene expression. This Homo sapiens (Human) protein is MHC class II transactivator.